A 285-amino-acid polypeptide reads, in one-letter code: 2-dehydro-3-deoxyphosphooctonate aldolase (285 aa).

It belongs to the KdsA family.

The protein resides in the cytoplasm. The enzyme catalyses D-arabinose 5-phosphate + phosphoenolpyruvate + H2O = 3-deoxy-alpha-D-manno-2-octulosonate-8-phosphate + phosphate. Its pathway is carbohydrate biosynthesis; 3-deoxy-D-manno-octulosonate biosynthesis; 3-deoxy-D-manno-octulosonate from D-ribulose 5-phosphate: step 2/3. It participates in bacterial outer membrane biogenesis; lipopolysaccharide biosynthesis. This is 2-dehydro-3-deoxyphosphooctonate aldolase from Albidiferax ferrireducens (strain ATCC BAA-621 / DSM 15236 / T118) (Rhodoferax ferrireducens).